The chain runs to 702 residues: Ribosomal RNA large subunit methyltransferase K/L (702 aa).

Positions 43-154 (LVYQSLMWSR…KETASIALDL (112 aa)) constitute a THUMP domain.

It belongs to the methyltransferase superfamily. RlmKL family.

The protein resides in the cytoplasm. It catalyses the reaction guanosine(2445) in 23S rRNA + S-adenosyl-L-methionine = N(2)-methylguanosine(2445) in 23S rRNA + S-adenosyl-L-homocysteine + H(+). The catalysed reaction is guanosine(2069) in 23S rRNA + S-adenosyl-L-methionine = N(2)-methylguanosine(2069) in 23S rRNA + S-adenosyl-L-homocysteine + H(+). Specifically methylates the guanine in position 2445 (m2G2445) and the guanine in position 2069 (m7G2069) of 23S rRNA. The chain is Ribosomal RNA large subunit methyltransferase K/L from Shigella boydii serotype 18 (strain CDC 3083-94 / BS512).